Reading from the N-terminus, the 518-residue chain is Ribonuclease Y (518 aa).

Residues 2 to 22 form a helical membrane-spanning segment; it reads GSIIISALLALVIGAVVGFFV. Residues 208–271 enclose the KH domain; that stretch reads TVSVVNLPND…ETARIALDKL (64 aa). Residues 334-427 form the HD domain; it reads VLKHSVEVAF…VAAADALSAA (94 aa).

This sequence belongs to the RNase Y family.

It is found in the cell membrane. Functionally, endoribonuclease that initiates mRNA decay. This chain is Ribonuclease Y, found in Geobacillus thermodenitrificans (strain NG80-2).